Here is a 420-residue protein sequence, read N- to C-terminus: UDP-N-acetylglucosamine 1-carboxyvinyltransferase (420 aa).

22-23 (KN) is a phosphoenolpyruvate binding site. UDP-N-acetyl-alpha-D-glucosamine is bound at residue Arg93. Cys117 (proton donor) is an active-site residue. Cys117 is subject to 2-(S-cysteinyl)pyruvic acid O-phosphothioketal. UDP-N-acetyl-alpha-D-glucosamine is bound by residues Asp307 and Ile329.

It belongs to the EPSP synthase family. MurA subfamily.

It is found in the cytoplasm. The enzyme catalyses phosphoenolpyruvate + UDP-N-acetyl-alpha-D-glucosamine = UDP-N-acetyl-3-O-(1-carboxyvinyl)-alpha-D-glucosamine + phosphate. It participates in cell wall biogenesis; peptidoglycan biosynthesis. In terms of biological role, cell wall formation. Adds enolpyruvyl to UDP-N-acetylglucosamine. The protein is UDP-N-acetylglucosamine 1-carboxyvinyltransferase of Alteromonas mediterranea (strain DSM 17117 / CIP 110805 / LMG 28347 / Deep ecotype).